Consider the following 259-residue polypeptide: Small ribosomal subunit protein uS2 (259 aa).

This sequence belongs to the universal ribosomal protein uS2 family.

This is Small ribosomal subunit protein uS2 from Streptococcus pneumoniae (strain 70585).